The primary structure comprises 358 residues: tRNA (guanine(26)-N(2))-dimethyltransferase (358 aa).

The Trm1 methyltransferase domain maps to 5-354; the sequence is VIRREGKAVF…ATYGEVERVL (350 aa). 5 residues coordinate S-adenosyl-L-methionine: arginine 39, arginine 69, aspartate 87, aspartate 113, and alanine 114.

It belongs to the class I-like SAM-binding methyltransferase superfamily. Trm1 family.

The catalysed reaction is guanosine(26) in tRNA + 2 S-adenosyl-L-methionine = N(2)-dimethylguanosine(26) in tRNA + 2 S-adenosyl-L-homocysteine + 2 H(+). Functionally, dimethylates a single guanine residue at position 26 of a number of tRNAs using S-adenosyl-L-methionine as donor of the methyl groups. The sequence is that of tRNA (guanine(26)-N(2))-dimethyltransferase from Pyrobaculum calidifontis (strain DSM 21063 / JCM 11548 / VA1).